The primary structure comprises 608 residues: UvrABC system protein C (608 aa).

Positions 16 to 94 (NRPGVYRMFD…IKEWRPPYNI (79 aa)) constitute a GIY-YIG domain. One can recognise a UVR domain in the interval 204–239 (NALADELNVGMEQAAMRLDFEKAAELRDQVAILRRV).

The protein belongs to the UvrC family. As to quaternary structure, interacts with UvrB in an incision complex.

The protein localises to the cytoplasm. The UvrABC repair system catalyzes the recognition and processing of DNA lesions. UvrC both incises the 5' and 3' sides of the lesion. The N-terminal half is responsible for the 3' incision and the C-terminal half is responsible for the 5' incision. This chain is UvrABC system protein C, found in Pseudomonas aeruginosa (strain LESB58).